The primary structure comprises 336 residues: Glycerol-3-phosphate dehydrogenase [NAD(P)+] (336 aa).

Residues S11, W12, R33, R34, and K107 each coordinate NADPH. The sn-glycerol 3-phosphate site is built by K107 and G137. Residue A141 participates in NADPH binding. 5 residues coordinate sn-glycerol 3-phosphate: K192, D245, S255, R256, and N257. K192 acts as the Proton acceptor in catalysis. R256 is an NADPH binding site. E282 lines the NADPH pocket.

Belongs to the NAD-dependent glycerol-3-phosphate dehydrogenase family.

The protein resides in the cytoplasm. The catalysed reaction is sn-glycerol 3-phosphate + NAD(+) = dihydroxyacetone phosphate + NADH + H(+). It carries out the reaction sn-glycerol 3-phosphate + NADP(+) = dihydroxyacetone phosphate + NADPH + H(+). Its pathway is membrane lipid metabolism; glycerophospholipid metabolism. Functionally, catalyzes the reduction of the glycolytic intermediate dihydroxyacetone phosphate (DHAP) to sn-glycerol 3-phosphate (G3P), the key precursor for phospholipid synthesis. In Thermobifida fusca (strain YX), this protein is Glycerol-3-phosphate dehydrogenase [NAD(P)+].